The primary structure comprises 80 residues: Dermaseptin-A5 (80 aa).

Positions 1 to 22 (MAFLKKSLFLVLFLGLVSLSIC) are cleaved as a signal peptide. Positions 23–43 (EEEKRENEDEEEQEDDEQSEM) are excised as a propeptide. Residues 24–45 (EEKRENEDEEEQEDDEQSEMKR) form a disordered region. Residues 30–40 (EDEEEQEDDEQ) are compositionally biased toward acidic residues. A Valine amide modification is found at V77. The propeptide occupies 79–80 (EQ).

Belongs to the frog skin active peptide (FSAP) family. Dermaseptin subfamily. In terms of tissue distribution, expressed by the skin glands.

The protein localises to the secreted. Possesses a potent antimicrobial activity against Gram-positive and Gram-negative bacteria. Probably acts by disturbing membrane functions with its amphipathic structure. In Agalychnis annae (Blue-sided leaf frog), this protein is Dermaseptin-A5.